The following is a 404-amino-acid chain: Cysteine desulfurase IscS (404 aa).

Pyridoxal 5'-phosphate is bound by residues 75-76 (AT), Asn155, Gln183, and 203-205 (SAH). Lys206 carries the post-translational modification N6-(pyridoxal phosphate)lysine. Residue Thr243 coordinates pyridoxal 5'-phosphate. Cys328 serves as the catalytic Cysteine persulfide intermediate. Residue Cys328 participates in [2Fe-2S] cluster binding.

The protein belongs to the class-V pyridoxal-phosphate-dependent aminotransferase family. NifS/IscS subfamily. In terms of assembly, homodimer. Forms a heterotetramer with IscU, interacts with other sulfur acceptors. Pyridoxal 5'-phosphate serves as cofactor.

The protein resides in the cytoplasm. The enzyme catalyses (sulfur carrier)-H + L-cysteine = (sulfur carrier)-SH + L-alanine. Its pathway is cofactor biosynthesis; iron-sulfur cluster biosynthesis. In terms of biological role, master enzyme that delivers sulfur to a number of partners involved in Fe-S cluster assembly, tRNA modification or cofactor biosynthesis. Catalyzes the removal of elemental sulfur atoms from cysteine to produce alanine. Functions as a sulfur delivery protein for Fe-S cluster synthesis onto IscU, an Fe-S scaffold assembly protein, as well as other S acceptor proteins. In Azotobacter vinelandii (strain DJ / ATCC BAA-1303), this protein is Cysteine desulfurase IscS.